Reading from the N-terminus, the 339-residue chain is Ketol-acid reductoisomerase (NADP(+)) (339 aa).

The KARI N-terminal Rossmann domain maps to 1-182; the sequence is MRVYYDRDAD…GGGRAGIIET (182 aa). Residues 24 to 27, Arg48, Ser51, Ser53, and 83 to 86 each bind NADP(+); these read YGSQ and DELQ. Residue His108 is part of the active site. Gly134 is an NADP(+) binding site. Positions 183–328 constitute a KARI C-terminal knotted domain; sequence TFKEECETDL…ARLRDMMPWI (146 aa). Positions 191, 195, 227, and 231 each coordinate Mg(2+). Ser252 contacts substrate.

Belongs to the ketol-acid reductoisomerase family. Mg(2+) is required as a cofactor.

It carries out the reaction (2R)-2,3-dihydroxy-3-methylbutanoate + NADP(+) = (2S)-2-acetolactate + NADPH + H(+). The enzyme catalyses (2R,3R)-2,3-dihydroxy-3-methylpentanoate + NADP(+) = (S)-2-ethyl-2-hydroxy-3-oxobutanoate + NADPH + H(+). The protein operates within amino-acid biosynthesis; L-isoleucine biosynthesis; L-isoleucine from 2-oxobutanoate: step 2/4. It functions in the pathway amino-acid biosynthesis; L-valine biosynthesis; L-valine from pyruvate: step 2/4. Its function is as follows. Involved in the biosynthesis of branched-chain amino acids (BCAA). Catalyzes an alkyl-migration followed by a ketol-acid reduction of (S)-2-acetolactate (S2AL) to yield (R)-2,3-dihydroxy-isovalerate. In the isomerase reaction, S2AL is rearranged via a Mg-dependent methyl migration to produce 3-hydroxy-3-methyl-2-ketobutyrate (HMKB). In the reductase reaction, this 2-ketoacid undergoes a metal-dependent reduction by NADPH to yield (R)-2,3-dihydroxy-isovalerate. In Bradyrhizobium sp. (strain ORS 278), this protein is Ketol-acid reductoisomerase (NADP(+)).